Consider the following 215-residue polypeptide: Pyrrolidone-carboxylate peptidase (215 aa).

Catalysis depends on residues Glu80, Cys143, and His167.

It belongs to the peptidase C15 family. Homotetramer.

It localises to the cytoplasm. It carries out the reaction Release of an N-terminal pyroglutamyl group from a polypeptide, the second amino acid generally not being Pro.. In terms of biological role, removes 5-oxoproline from various penultimate amino acid residues except L-proline. The chain is Pyrrolidone-carboxylate peptidase from Bacillus anthracis.